A 368-amino-acid chain; its full sequence is Phospho-N-acetylmuramoyl-pentapeptide-transferase (368 aa).

The next 9 helical transmembrane spans lie at 23 to 43 (YITF…LVFG), 72 to 92 (IPTM…LLWA), 94 to 114 (IAEP…AVGF), 139 to 159 (VALG…SVLL), 170 to 190 (ITVD…TAVS), 201 to 221 (GLAA…AYLT), 238 to 258 (AGEV…FLWF), 265 to 286 (VFMG…ALLI), and 345 to 365 (KIVI…LLTL).

It belongs to the glycosyltransferase 4 family. MraY subfamily. Mg(2+) serves as cofactor.

The protein localises to the cell inner membrane. The enzyme catalyses UDP-N-acetyl-alpha-D-muramoyl-L-alanyl-gamma-D-glutamyl-meso-2,6-diaminopimeloyl-D-alanyl-D-alanine + di-trans,octa-cis-undecaprenyl phosphate = di-trans,octa-cis-undecaprenyl diphospho-N-acetyl-alpha-D-muramoyl-L-alanyl-D-glutamyl-meso-2,6-diaminopimeloyl-D-alanyl-D-alanine + UMP. It participates in cell wall biogenesis; peptidoglycan biosynthesis. Its function is as follows. Catalyzes the initial step of the lipid cycle reactions in the biosynthesis of the cell wall peptidoglycan: transfers peptidoglycan precursor phospho-MurNAc-pentapeptide from UDP-MurNAc-pentapeptide onto the lipid carrier undecaprenyl phosphate, yielding undecaprenyl-pyrophosphoryl-MurNAc-pentapeptide, known as lipid I. This chain is Phospho-N-acetylmuramoyl-pentapeptide-transferase, found in Chloroherpeton thalassium (strain ATCC 35110 / GB-78).